The following is an 86-amino-acid chain: Cytochrome c6 (86 aa).

The heme c site is built by C14, C17, H18, and M58.

It belongs to the cytochrome c family. PetJ subfamily. As to quaternary structure, monomer. Binds 1 heme c group covalently per subunit.

Its subcellular location is the cellular thylakoid lumen. Functionally, functions as an electron carrier between membrane-bound cytochrome b6-f and photosystem I in oxygenic photosynthesis. The polypeptide is Cytochrome c6 (petJ) (Anabaena variabilis).